We begin with the raw amino-acid sequence, 233 residues long: Type IV secretion system protein PtlE homolog (233 aa).

A helical transmembrane segment spans residues 42–62 (VAWAALAVTALSLIAIATMLP).

Belongs to the virB8 family.

It localises to the cell inner membrane. This chain is Type IV secretion system protein PtlE homolog (ptlE), found in Bordetella bronchiseptica (strain ATCC BAA-588 / NCTC 13252 / RB50) (Alcaligenes bronchisepticus).